We begin with the raw amino-acid sequence, 75 residues long: Sperm-specific protein PL-I (75 aa).

The H15 domain occupies 2–74 (GSSGMMSMVA…GSAGWVLVPK (73 aa)).

Belongs to the histone H1/H5 family. As to expression, sperm.

The protein localises to the nucleus. Its subcellular location is the chromosome. Its function is as follows. Linker histones are implicated in chromatin remodeling and/or transcriptional regulation during spermiogenesis, the process of spermatid maturation into spermatozoa. In Spisula solidissima (Atlantic surf-clam), this protein is Sperm-specific protein PL-I.